A 333-amino-acid chain; its full sequence is Probable tRNA-dihydrouridine synthase 1 (333 aa).

FMN-binding positions include 17-19 (PMA) and Gln71. Cys102 functions as the Proton donor in the catalytic mechanism. Residues Lys141, 202-204 (NGD), and 226-227 (GR) contribute to the FMN site.

Belongs to the Dus family. FMN is required as a cofactor.

The catalysed reaction is a 5,6-dihydrouridine in tRNA + NAD(+) = a uridine in tRNA + NADH + H(+). It carries out the reaction a 5,6-dihydrouridine in tRNA + NADP(+) = a uridine in tRNA + NADPH + H(+). Catalyzes the synthesis of 5,6-dihydrouridine (D), a modified base found in the D-loop of most tRNAs, via the reduction of the C5-C6 double bond in target uridines. The sequence is that of Probable tRNA-dihydrouridine synthase 1 (dus1) from Bacillus subtilis (strain 168).